The sequence spans 310 residues: Proline iminopeptidase (310 aa).

In terms of domain architecture, AB hydrolase-1 spans 33–290; it reads PVIFLHGGPG…RVVQAGHRAF (258 aa). Ser-107 acts as the Nucleophile in catalysis. Asp-260 is an active-site residue. Catalysis depends on His-287, which acts as the Proton donor.

This sequence belongs to the peptidase S33 family.

Its subcellular location is the cytoplasm. It carries out the reaction Release of N-terminal proline from a peptide.. Its function is as follows. Specifically catalyzes the removal of N-terminal proline residues from peptides. The polypeptide is Proline iminopeptidase (pip) (Neisseria meningitidis serogroup B (strain ATCC BAA-335 / MC58)).